We begin with the raw amino-acid sequence, 347 residues long: UDP-3-O-acylglucosamine N-acyltransferase (347 aa).

The active-site Proton acceptor is His-241.

The protein belongs to the transferase hexapeptide repeat family. LpxD subfamily. Homotrimer.

It catalyses the reaction a UDP-3-O-[(3R)-3-hydroxyacyl]-alpha-D-glucosamine + a (3R)-hydroxyacyl-[ACP] = a UDP-2-N,3-O-bis[(3R)-3-hydroxyacyl]-alpha-D-glucosamine + holo-[ACP] + H(+). Its pathway is bacterial outer membrane biogenesis; LPS lipid A biosynthesis. In terms of biological role, catalyzes the N-acylation of UDP-3-O-acylglucosamine using 3-hydroxyacyl-ACP as the acyl donor. Is involved in the biosynthesis of lipid A, a phosphorylated glycolipid that anchors the lipopolysaccharide to the outer membrane of the cell. This chain is UDP-3-O-acylglucosamine N-acyltransferase, found in Nitrosococcus oceani (strain ATCC 19707 / BCRC 17464 / JCM 30415 / NCIMB 11848 / C-107).